We begin with the raw amino-acid sequence, 281 residues long: Pantothenate synthetase (281 aa).

Position 30–37 (30–37 (MGALHRGH)) interacts with ATP. His37 serves as the catalytic Proton donor. Gln61 is a (R)-pantoate binding site. Gln61 lines the beta-alanine pocket. Residue 147 to 150 (GEKD) coordinates ATP. A (R)-pantoate-binding site is contributed by Gln153. ATP is bound by residues Ile176 and 184–187 (LSSR).

It belongs to the pantothenate synthetase family. As to quaternary structure, homodimer.

It localises to the cytoplasm. The enzyme catalyses (R)-pantoate + beta-alanine + ATP = (R)-pantothenate + AMP + diphosphate + H(+). The protein operates within cofactor biosynthesis; (R)-pantothenate biosynthesis; (R)-pantothenate from (R)-pantoate and beta-alanine: step 1/1. Its function is as follows. Catalyzes the condensation of pantoate with beta-alanine in an ATP-dependent reaction via a pantoyl-adenylate intermediate. This Porphyromonas gingivalis (strain ATCC 33277 / DSM 20709 / CIP 103683 / JCM 12257 / NCTC 11834 / 2561) protein is Pantothenate synthetase.